The chain runs to 202 residues: Cytochrome c biogenesis ATP-binding export protein CcmA (202 aa).

The ABC transporter domain maps to 3-200 (LAAENLSGER…EGTQELKMGA (198 aa)). 35–42 (GPNGAGKS) contacts ATP.

It belongs to the ABC transporter superfamily. CcmA exporter (TC 3.A.1.107) family. In terms of assembly, the complex is composed of two ATP-binding proteins (CcmA) and two transmembrane proteins (CcmB).

The protein resides in the cell inner membrane. The catalysed reaction is heme b(in) + ATP + H2O = heme b(out) + ADP + phosphate + H(+). Functionally, part of the ABC transporter complex CcmAB involved in the biogenesis of c-type cytochromes; once thought to export heme, this seems not to be the case, but its exact role is uncertain. Responsible for energy coupling to the transport system. In Chelativorans sp. (strain BNC1), this protein is Cytochrome c biogenesis ATP-binding export protein CcmA.